Here is a 75-residue protein sequence, read N- to C-terminus: Porwaprin-b (75 aa).

A signal peptide spans 1-24 (MSSGGLLLLLGLLTLWAELTPVSG). Positions 27–72 (RPVKPGLCPPRPQKPPCVKECKNDWSCRGEQKCCHYGCIYECRDPI) constitute a WAP domain. 4 cysteine pairs are disulfide-bonded: Cys34-Cys60, Cys43-Cys64, Cys47-Cys59, and Cys53-Cys68.

The protein belongs to the venom waprin family. As to expression, expressed by the venom gland.

It localises to the secreted. Its function is as follows. Damages membranes of susceptible bacteria. Has no hemolytic activity. Not toxic to mice. Does not inhibit the proteinases elastase and cathepsin G. This chain is Porwaprin-b, found in Pseudechis porphyriacus (Red-bellied black snake).